Here is a 160-residue protein sequence, read N- to C-terminus: Protein shisa-like-2B (160 aa).

A helical membrane pass occupies residues 65–85 (IGALIGLGIAALVLLAFVISV).

The protein belongs to the shisa family.

The protein localises to the membrane. The protein is Protein shisa-like-2B of Homo sapiens (Human).